A 253-amino-acid chain; its full sequence is Probable transcriptional regulatory protein SynRCC307_1833 (253 aa).

This sequence belongs to the TACO1 family.

It is found in the cytoplasm. The polypeptide is Probable transcriptional regulatory protein SynRCC307_1833 (Synechococcus sp. (strain RCC307)).